Reading from the N-terminus, the 83-residue chain is Cell division topological specificity factor (83 aa).

This sequence belongs to the MinE family.

Its function is as follows. Prevents the cell division inhibition by proteins MinC and MinD at internal division sites while permitting inhibition at polar sites. This ensures cell division at the proper site by restricting the formation of a division septum at the midpoint of the long axis of the cell. The sequence is that of Cell division topological specificity factor from Buchnera aphidicola subsp. Baizongia pistaciae (strain Bp).